Consider the following 143-residue polypeptide: MAKKIVGFIKLQVPAGKANPSPPIGPALGQRGLNIMEFCKAFNAQTQGVEPGLPLPVVITAFADKSFTFIIKTPPATTLIKKAIKLEKGSASALSTKVGKITRAQLEEIAKTKMKDMNAANVDAAVRTLAGSARSMGVTVEGL.

It belongs to the universal ribosomal protein uL11 family. As to quaternary structure, part of the ribosomal stalk of the 50S ribosomal subunit. Interacts with L10 and the large rRNA to form the base of the stalk. L10 forms an elongated spine to which L12 dimers bind in a sequential fashion forming a multimeric L10(L12)X complex. In terms of processing, one or more lysine residues are methylated.

Forms part of the ribosomal stalk which helps the ribosome interact with GTP-bound translation factors. The chain is Large ribosomal subunit protein uL11 from Verminephrobacter eiseniae (strain EF01-2).